Consider the following 202-residue polypeptide: Josephin-1 (202 aa).

Serine 15 is modified (phosphoserine). Residues 23-202 (PPQIYHEKQR…EAHQSWRADV (180 aa)) form the Josephin domain. Residue cysteine 36 is the Nucleophile of the active site. Catalysis depends on histidine 139, which acts as the Proton acceptor.

Interacts with beta-actin/ACTB. Monoubiquitinated. Ubiquitination activates deubiquitination activity in vitro.

It localises to the cell membrane. The protein resides in the cytoplasm. The catalysed reaction is Thiol-dependent hydrolysis of ester, thioester, amide, peptide and isopeptide bonds formed by the C-terminal Gly of ubiquitin (a 76-residue protein attached to proteins as an intracellular targeting signal).. Its function is as follows. Deubiquitinates monoubiquitinated probes (in vitro). When ubiquitinated, cleaves 'Lys-63'-linked and 'Lys-48'-linked poly-ubiquitin chains (in vitro), hence may act as a deubiquitinating enzyme. May increase macropinocytosis and suppress clathrin- and caveolae-mediated endocytosis. May enhance membrane dynamics and cell motility independently of its catalytic activity. The sequence is that of Josephin-1 (JOSD1) from Bos taurus (Bovine).